Here is a 74-residue protein sequence, read N- to C-terminus: Tetrahydromethanopterin S-methyltransferase subunit G (74 aa).

The helical transmembrane segment at 47 to 67 threads the bilayer; the sequence is VGIAYGLAIGFIFVYVLGTVL.

The protein belongs to the MtrG family. The complex is composed of 8 subunits; MtrA, MtrB, MtrC, MtrD, MtrE, MtrF, MtrG and MtrH.

The protein resides in the cell membrane. It carries out the reaction 5-methyl-5,6,7,8-tetrahydromethanopterin + coenzyme M + 2 Na(+)(in) = 5,6,7,8-tetrahydromethanopterin + methyl-coenzyme M + 2 Na(+)(out). It functions in the pathway one-carbon metabolism; methanogenesis from CO(2); methyl-coenzyme M from 5,10-methylene-5,6,7,8-tetrahydromethanopterin: step 2/2. Functionally, part of a complex that catalyzes the formation of methyl-coenzyme M and tetrahydromethanopterin from coenzyme M and methyl-tetrahydromethanopterin. This is an energy-conserving, sodium-ion translocating step. The polypeptide is Tetrahydromethanopterin S-methyltransferase subunit G (Methanococcus maripaludis (strain DSM 14266 / JCM 13030 / NBRC 101832 / S2 / LL)).